Reading from the N-terminus, the 425-residue chain is Testicular acid phosphatase (425 aa).

The N-terminal stretch at 1-27 (MAEPGSQGHTVGPLLLLLLLLLPRALP) is a signal peptide. Topologically, residues 28–392 (EGPLLFVALV…EPASPPATVP (365 aa)) are extracellular. The Nucleophile role is filled by His40. 3 disulfide bridges follow: Cys158/Cys378, Cys213/Cys311, and Cys353/Cys357. The active-site Proton donor is the Asp288. The chain crosses the membrane as a helical span at residues 393–413 (LLAGAVAVLAVLSLGLGLLAW). The Cytoplasmic segment spans residues 414 to 425 (RPRCLRALGGTV).

The protein belongs to the histidine acid phosphatase family. As to quaternary structure, homodimer. Post-translationally, glycosylated.

It is found in the membrane. The enzyme catalyses a phosphate monoester + H2O = an alcohol + phosphate. May dephosphorylate receptor tyrosine-protein kinase ERBB4 and inhibits its ligand-induced proteolytic cleavage. May play a role in odontogenesis. This Mus musculus (Mouse) protein is Testicular acid phosphatase.